The following is a 383-amino-acid chain: Dihydroorotase (383 aa).

Zn(2+)-binding residues include histidine 47 and histidine 49. Residues 49 to 51 (HFR) and asparagine 81 each bind substrate. Zn(2+) is bound by residues lysine 128, histidine 159, histidine 198, and aspartate 264. Lysine 128 bears the N6-carboxylysine mark. Aspartate 264 is a catalytic residue. Residues histidine 268 and 280-281 (PG) each bind substrate.

It belongs to the metallo-dependent hydrolases superfamily. DHOase family. Class I DHOase subfamily. The cofactor is Zn(2+).

The enzyme catalyses (S)-dihydroorotate + H2O = N-carbamoyl-L-aspartate + H(+). The protein operates within pyrimidine metabolism; UMP biosynthesis via de novo pathway; (S)-dihydroorotate from bicarbonate: step 3/3. Its function is as follows. Catalyzes the reversible cyclization of carbamoyl aspartate to dihydroorotate. This is Dihydroorotase from Pyrobaculum aerophilum (strain ATCC 51768 / DSM 7523 / JCM 9630 / CIP 104966 / NBRC 100827 / IM2).